Reading from the N-terminus, the 607-residue chain is tRNA uridine 5-carboxymethylaminomethyl modification enzyme MnmG (607 aa).

Residues 11–16 (GGGHAG), Val123, and Ser178 contribute to the FAD site. Position 270 to 284 (270 to 284 (GPRYCPSVEDKIVRF)) interacts with NAD(+). Position 367 (Gln367) interacts with FAD.

It belongs to the MnmG family. In terms of assembly, homodimer. Heterotetramer of two MnmE and two MnmG subunits. It depends on FAD as a cofactor.

The protein localises to the cytoplasm. Functionally, NAD-binding protein involved in the addition of a carboxymethylaminomethyl (cmnm) group at the wobble position (U34) of certain tRNAs, forming tRNA-cmnm(5)s(2)U34. The protein is tRNA uridine 5-carboxymethylaminomethyl modification enzyme MnmG of Metamycoplasma arthritidis (strain 158L3-1) (Mycoplasma arthritidis).